A 187-amino-acid polypeptide reads, in one-letter code: Elongation factor P (187 aa).

At lysine 34 the chain carries N6-(3,6-diaminohexanoyl)-5-hydroxylysine.

It belongs to the elongation factor P family. In terms of processing, may be beta-lysylated on the epsilon-amino group of Lys-34 by the combined action of EpmA and EpmB, and then hydroxylated on the C5 position of the same residue by EpmC (if this protein is present). Lysylation is critical for the stimulatory effect of EF-P on peptide-bond formation. The lysylation moiety may extend toward the peptidyltransferase center and stabilize the terminal 3-CCA end of the tRNA. Hydroxylation of the C5 position on Lys-34 may allow additional potential stabilizing hydrogen-bond interactions with the P-tRNA.

The protein resides in the cytoplasm. Its pathway is protein biosynthesis; polypeptide chain elongation. Functionally, involved in peptide bond synthesis. Alleviates ribosome stalling that occurs when 3 or more consecutive Pro residues or the sequence PPG is present in a protein, possibly by augmenting the peptidyl transferase activity of the ribosome. Modification of Lys-34 is required for alleviation. The chain is Elongation factor P from Buchnera aphidicola subsp. Schizaphis graminum (strain Sg).